Reading from the N-terminus, the 389-residue chain is Glutamate 5-kinase (389 aa).

An ATP-binding site is contributed by K26. Substrate contacts are provided by S66, D153, and N167. 187–188 (TD) serves as a coordination point for ATP. In terms of domain architecture, PUA spans 293 to 371 (AGTLFLDQGA…EQIEWILGHR (79 aa)).

This sequence belongs to the glutamate 5-kinase family.

It is found in the cytoplasm. The catalysed reaction is L-glutamate + ATP = L-glutamyl 5-phosphate + ADP. Its pathway is amino-acid biosynthesis; L-proline biosynthesis; L-glutamate 5-semialdehyde from L-glutamate: step 1/2. Its function is as follows. Catalyzes the transfer of a phosphate group to glutamate to form L-glutamate 5-phosphate. This chain is Glutamate 5-kinase, found in Rhodopirellula baltica (strain DSM 10527 / NCIMB 13988 / SH1).